The primary structure comprises 150 residues: Transcriptional repressor NrdR (150 aa).

A zinc finger spans residues Cys-3–Cys-34. The region spanning Ile-49–Ser-139 is the ATP-cone domain.

This sequence belongs to the NrdR family. Zn(2+) is required as a cofactor.

Functionally, negatively regulates transcription of bacterial ribonucleotide reductase nrd genes and operons by binding to NrdR-boxes. The protein is Transcriptional repressor NrdR of Petrotoga mobilis (strain DSM 10674 / SJ95).